We begin with the raw amino-acid sequence, 161 residues long: Large ribosomal subunit protein uL15 (161 aa).

The segment at methionine 1–glycine 43 is disordered. Positions arginine 21–glycine 37 are enriched in gly residues.

The protein belongs to the universal ribosomal protein uL15 family. In terms of assembly, part of the 50S ribosomal subunit.

In terms of biological role, binds to the 23S rRNA. This is Large ribosomal subunit protein uL15 from Bradyrhizobium sp. (strain BTAi1 / ATCC BAA-1182).